Reading from the N-terminus, the 279-residue chain is Probable endonuclease 4 (279 aa).

H74, H112, E147, D180, H183, H214, D227, H229, and E259 together coordinate Zn(2+).

This sequence belongs to the AP endonuclease 2 family. The cofactor is Zn(2+).

It catalyses the reaction Endonucleolytic cleavage to 5'-phosphooligonucleotide end-products.. In terms of biological role, endonuclease IV plays a role in DNA repair. It cleaves phosphodiester bonds at apurinic or apyrimidinic (AP) sites, generating a 3'-hydroxyl group and a 5'-terminal sugar phosphate. This is Probable endonuclease 4 from Mycoplasma mobile (strain ATCC 43663 / 163K / NCTC 11711) (Mesomycoplasma mobile).